We begin with the raw amino-acid sequence, 123 residues long: MNAVTESAATTAEMPVPFVFTDAAADKVKQLIDEEGNPDLKLRVFVQGGGCSGFQYGFTFDEEVNEDDTVMNKNGVQLLIDSMSYQYLVGAEIDYKDDLNGAQFVIKNPNASTTCGCGSSFSV.

Iron-sulfur cluster contacts are provided by Cys-51, Cys-115, and Cys-117.

It belongs to the HesB/IscA family. Homodimer. Requires iron-sulfur cluster as cofactor.

In terms of biological role, required for insertion of 4Fe-4S clusters. The sequence is that of Putative iron-sulfur cluster insertion protein ErpA from Burkholderia lata (strain ATCC 17760 / DSM 23089 / LMG 22485 / NCIMB 9086 / R18194 / 383).